A 141-amino-acid chain; its full sequence is Putative pre-16S rRNA nuclease (141 aa).

This sequence belongs to the YqgF nuclease family.

Its subcellular location is the cytoplasm. Could be a nuclease involved in processing of the 5'-end of pre-16S rRNA. The protein is Putative pre-16S rRNA nuclease of Chlorobium luteolum (strain DSM 273 / BCRC 81028 / 2530) (Pelodictyon luteolum).